An 852-amino-acid chain; its full sequence is Bifunctional uridylyltransferase/uridylyl-removing enzyme (852 aa).

The segment at Met-1–Ile-318 is uridylyltransferase. Positions Asp-319 to Phe-672 are uridylyl-removing. In terms of domain architecture, HD spans Val-436–Leu-558. 2 ACT domains span residues Gln-673 to Arg-757 and Ser-785 to Ala-852.

This sequence belongs to the GlnD family. Mg(2+) serves as cofactor.

It carries out the reaction [protein-PII]-L-tyrosine + UTP = [protein-PII]-uridylyl-L-tyrosine + diphosphate. The catalysed reaction is [protein-PII]-uridylyl-L-tyrosine + H2O = [protein-PII]-L-tyrosine + UMP + H(+). Uridylyltransferase (UTase) activity is inhibited by glutamine, while glutamine activates uridylyl-removing (UR) activity. Modifies, by uridylylation and deuridylylation, the PII regulatory proteins (GlnB and homologs), in response to the nitrogen status of the cell that GlnD senses through the glutamine level. Under low glutamine levels, catalyzes the conversion of the PII proteins and UTP to PII-UMP and PPi, while under higher glutamine levels, GlnD hydrolyzes PII-UMP to PII and UMP (deuridylylation). Thus, controls uridylylation state and activity of the PII proteins, and plays an important role in the regulation of nitrogen assimilation and metabolism. This Neisseria gonorrhoeae (strain NCCP11945) protein is Bifunctional uridylyltransferase/uridylyl-removing enzyme.